The primary structure comprises 303 residues: Methionyl-tRNA formyltransferase (303 aa).

Residue 111 to 114 (SLLP) participates in (6S)-5,6,7,8-tetrahydrofolate binding.

This sequence belongs to the Fmt family.

The catalysed reaction is L-methionyl-tRNA(fMet) + (6R)-10-formyltetrahydrofolate = N-formyl-L-methionyl-tRNA(fMet) + (6S)-5,6,7,8-tetrahydrofolate + H(+). Functionally, attaches a formyl group to the free amino group of methionyl-tRNA(fMet). The formyl group appears to play a dual role in the initiator identity of N-formylmethionyl-tRNA by promoting its recognition by IF2 and preventing the misappropriation of this tRNA by the elongation apparatus. The chain is Methionyl-tRNA formyltransferase from Ehrlichia chaffeensis (strain ATCC CRL-10679 / Arkansas).